A 555-amino-acid polypeptide reads, in one-letter code: Vacuolar fusion protein MON1 homolog A (555 aa).

The segment covering 1–12 (MAADMQRKRSSE) has biased composition (basic and acidic residues). The tract at residues 1-90 (MAADMQRKRS…PPLATDMRQI (90 aa)) is disordered. Residues Ser31 and Ser56 each carry the phosphoserine modification. Thr61 bears the Phosphothreonine mark. A Phosphoserine modification is found at Ser91. The disordered stretch occupies residues 112-149 (MLPGSSEDWPESPGAARRPATEPPRDGAGEGDEEEAAE). Positions 130–139 (PATEPPRDGA) are enriched in basic and acidic residues.

It belongs to the MON1/SAND family. In terms of assembly, interacts with CCZ1. Found in a complex with RMC1, CCZ1, MON1A and MON1B. The MON1A-CCZ1B complex interacts with RIMOC1. The MON1A-CCZ1B complex interacts with RAB7A and this interaction is enhanced in the presence of RIMOC1.

Its function is as follows. Plays an important role in membrane trafficking through the secretory apparatus. Not involved in endocytic trafficking to lysosomes. Acts in concert with CCZ1, as a guanine exchange factor (GEF) for RAB7, promotes the exchange of GDP to GTP, converting it from an inactive GDP-bound form into an active GTP-bound form. The polypeptide is Vacuolar fusion protein MON1 homolog A (MON1A) (Bos taurus (Bovine)).